The sequence spans 656 residues: Anion exchange transporter (656 aa).

Residues 1–75 (MTGAKRKKKS…LAFAVLSSVH (75 aa)) are Cytoplasmic-facing. Residues 76–96 (PVFGLYGSLFPAIIYAIFGMG) traverse the membrane as a helical segment. Over 97-144 (HHVATGTFALTSLISANAVERIVPQNMQNLTTQSNTSVLGLSDFEMQR) the chain is Extracellular. Residues 145 to 165 (IHVAAAVSFLGGVIQVAMFVL) traverse the membrane as a helical segment. Residue Q166 is a topological domain, cytoplasmic. Residues 167-187 (LGSATFVVTEPVISAMTTGAA) traverse the membrane as a helical segment. Over 188 to 202 (THVVTSQVKYLLGMK) the chain is Extracellular. A helical membrane pass occupies residues 203–223 (MPYISGPLGFFYIYAYVFENI). Over 224-227 (KSVR) the chain is Cytoplasmic. A helical membrane pass occupies residues 228-248 (LEALLLSLLSIVVLVLVKELN). The Extracellular segment spans residues 249–254 (EQFKRK). The chain crosses the membrane as a helical span at residues 255 to 275 (IKVVLPVDLVLIIAASFACYC). Residues 276–306 (TNMENTYGLEVVGHIPQGIPSPRAPPMNILS) are Cytoplasmic-facing. A helical membrane pass occupies residues 307–327 (AVITEAFGVALVGYVASLALA). The Extracellular segment spans residues 328–343 (QGSAKKFKYSIDDNQE). The helical transmembrane segment at 344–364 (FLAHGLSNIVSSFFFCIPSAA) threads the bilayer. Residues 365–383 (AMGRTAGLYSTGAKTQVAC) are Cytoplasmic-facing. The next 2 helical transmembrane spans lie at 384-404 (LISC…LYWL) and 405-425 (PMCV…IQFR). Over 426-448 (DLKKYWNVDKIDWGIWVSTYVFT) the chain is Extracellular. The helical transmembrane segment at 449–469 (ICFAANVGLLFGVVCTIAIVI) threads the bilayer. Residues 470–656 (GRFPRAMTVS…LSKLSDHSEV (187 aa)) are Cytoplasmic-facing. Positions 492–641 (TEMDSETLQQ…ESVSAAISHI (150 aa)) constitute an STAS domain. Residues 641–656 (IHSNKNLSKLSDHSEV) form a membrane targeting region.

Belongs to the SLC26A/SulP transporter (TC 2.A.53) family. In terms of tissue distribution, expressed in the thyroid gland (at protein level). Expressed in tonsillar high endothelial venule endothelial cells (HEVEC), placenta and in testis, expressed in a subgroup of basal cells in the epididymal ducts.

It localises to the basolateral cell membrane. The protein resides in the recycling endosome membrane. Its subcellular location is the apical cell membrane. It is found in the lateral cell membrane. It catalyses the reaction chloride(in) = chloride(out). The enzyme catalyses iodide(out) = iodide(in). It carries out the reaction bromide(in) = bromide(out). The catalysed reaction is oxalate(in) = oxalate(out). It catalyses the reaction nitrate(in) = nitrate(out). The enzyme catalyses sulfate(in) = sulfate(out). It carries out the reaction thiocyanate(in) = thiocyanate(out). The catalysed reaction is D-gluconate(in) = D-gluconate(out). It catalyses the reaction hydrogencarbonate(in) = hydrogencarbonate(out). The enzyme catalyses hydrogencarbonate(in) + chloride(out) = hydrogencarbonate(out) + chloride(in). Is active at both alkaline and acidic pH. Activity is inhibited by 4,4'-Di-isothiocyanatostilbene-2,2'-disulfonic acid (DIDS - an inhibitor of several anion channels and transporters). Functionally, acts as an anion channel mediating the transport of chloride, sulfate and oxalate ions. Mediates the transport of bromide, iodide, nitrate, gluconate, thiocyanate and bicarbonate ions. Its permeability towards bicarbonate is weak and increases when pH is above 7. Mediates thiocyanate transport in retinal pigment epithelium cells. Mediates iodide transport in the thyroid gland, playing an important role in the synthesis of thyroid hormones and the maintenance of thyroid function. Although it is an anion channel, according to PubMed:12736153 and PubMed:32119864 it has been shown to exhibit chloride-bicarbonate exchanger activity. This chain is Anion exchange transporter, found in Homo sapiens (Human).